Here is a 229-residue protein sequence, read N- to C-terminus: (S)-2-haloacid dehalogenase 2 (229 aa).

Asp10 serves as the catalytic Nucleophile. An (S)-2-haloacid-binding positions include 11–12 (LY), Arg41, and 118–119 (SN). An important for catalytic activity region spans residues 175-180 (SSNAWD).

This sequence belongs to the HAD-like hydrolase superfamily. S-2-haloalkanoic acid dehalogenase family.

It catalyses the reaction an (S)-2-haloacid + H2O = a (2R)-2-hydroxycarboxylate + a halide anion + H(+). The enzyme catalyses (S)-2-chloropropanoate + H2O = (R)-lactate + chloride + H(+). Functionally, catalyzes the hydrolytic dehalogenation of small (S)-2-haloalkanoic acids to yield the corresponding (R)-2-hydroxyalkanoic acids. Acts on acids of short chain lengths, C(2) to C(4), with inversion of configuration at C-2. Active with 2-halogenated carboxylic acids and converts only the S-isomer (or L-isomer) of 2-chloropropionic acid with inversion of configuration to produce R-lactate (or D-isomer). The polypeptide is (S)-2-haloacid dehalogenase 2 (Pseudomonas sp. (strain CBS-3)).